We begin with the raw amino-acid sequence, 259 residues long: Potassium/proton antiporter CemA (259 aa).

The next 4 helical transmembrane spans lie at 47 to 67 (CLLV…EPWV), 136 to 156 (IITH…YLVM), 184 to 204 (ILLA…ELLI), and 219 to 239 (IISS…KYWI).

It belongs to the CemA family.

It is found in the plastid. The protein resides in the chloroplast inner membrane. It carries out the reaction K(+)(in) + H(+)(out) = K(+)(out) + H(+)(in). Contributes to K(+)/H(+) antiport activity by supporting proton efflux to control proton extrusion and homeostasis in chloroplasts in a light-dependent manner to modulate photosynthesis. Prevents excessive induction of non-photochemical quenching (NPQ) under continuous-light conditions. Indirectly promotes efficient inorganic carbon uptake into chloroplasts. The sequence is that of Potassium/proton antiporter CemA from Welwitschia mirabilis (Tree tumbo).